Reading from the N-terminus, the 102-residue chain is Large ribosomal subunit protein bL21 (102 aa).

It belongs to the bacterial ribosomal protein bL21 family. Part of the 50S ribosomal subunit. Contacts protein L20.

Its function is as follows. This protein binds to 23S rRNA in the presence of protein L20. The chain is Large ribosomal subunit protein bL21 from Onion yellows phytoplasma (strain OY-M).